The chain runs to 428 residues: MLTIYHFPQDEAALREQLNRTVSFDPDAQRTVDDILYRVRTEGDAAVLDYTERFQGIRLYDMRVPEAEIEAAYAAADPEFIAILEEAFANITAFHRNEAEKSFFYEQKGGVILGQRVTPMEKALLYVPGGKAAYPSSVLMNAAPAQVAGVDEISMTTPCDAEGKVNPHILAAAKVAGITSVYRLGGAQAVAAFAYGTATIPKVDIVTGPGNKYVALAKKQVFGHVAIDSIAGPSEVVVIADAGAEPEFIVMDMFAQAEHDPDASAVLITPSAELADAVRETAARLAGTMLRGEVITRALTDNGAIVVTGSMQEACKVSDMIAPEHLELHVDNPWEILPDLRHAGAIFMGQWSCETVGDYFAGPNHTLPTNGTARFFSPLSVRDFVKHTSIIAWSKSELARTGEKIARFADHEGLQAHAEAVRVRLKHL.

Residues tyrosine 126, glutamine 188, and asparagine 211 each contribute to the NAD(+) site. Positions 234, 256, and 259 each coordinate substrate. Zn(2+)-binding residues include glutamine 256 and histidine 259. Residues glutamate 324 and histidine 325 each act as proton acceptor in the active site. Residues histidine 325, aspartate 358, glutamate 412, and histidine 417 each contribute to the substrate site. Aspartate 358 is a binding site for Zn(2+). Histidine 417 serves as a coordination point for Zn(2+).

It belongs to the histidinol dehydrogenase family. Requires Zn(2+) as cofactor.

It catalyses the reaction L-histidinol + 2 NAD(+) + H2O = L-histidine + 2 NADH + 3 H(+). Its pathway is amino-acid biosynthesis; L-histidine biosynthesis; L-histidine from 5-phospho-alpha-D-ribose 1-diphosphate: step 9/9. Functionally, catalyzes the sequential NAD-dependent oxidations of L-histidinol to L-histidinaldehyde and then to L-histidine. The polypeptide is Histidinol dehydrogenase (Chlorobaculum tepidum (strain ATCC 49652 / DSM 12025 / NBRC 103806 / TLS) (Chlorobium tepidum)).